The chain runs to 385 residues: Initiation-specific alpha-1,6-mannosyltransferase (385 aa).

The Cytoplasmic portion of the chain corresponds to M1–K15. The chain crosses the membrane as a helical; Signal-anchor for type II membrane protein span at residues L16–S36. Topologically, residues P37–Q385 are lumenal. Positions D189–D191 match the DXD motif motif.

The protein belongs to the glycosyltransferase 32 family. Mn(2+) serves as cofactor.

Its subcellular location is the endoplasmic reticulum membrane. The protein localises to the golgi apparatus membrane. It catalyses the reaction Transfers an alpha-D-mannosyl residue from GDP-mannose into lipid-linked oligosaccharide, forming an alpha-(1-&gt;6)-D-mannosyl-D-mannose linkage.. Functionally, mannosyltransferase involved in outer chain elongation of asparagine-linked oligosaccharides of the type Man(9)GlcNAc(2). Adds the first alpha-1,6-mannose to the Man(8)GlcNAc(2) and Man(9)GlcNAc(2), but not Man(5)GlcNAc(2), endoplasmic reticulum intermediates. Represents the first enzymatic event required for synthesis of outer chain mannose linkages on yeast secretory proteins. N-glycan outer chain epitopes play a crucial role in the host-fungal interaction, virulence, and host immune response such as interleukin synthesis or phagocytosis by neutrophils. In Candida albicans (strain SC5314 / ATCC MYA-2876) (Yeast), this protein is Initiation-specific alpha-1,6-mannosyltransferase.